A 221-amino-acid chain; its full sequence is Glycerol metabolism activator (221 aa).

In terms of domain architecture, Response regulatory spans 3–120; the sequence is KILIADDHPL…QMTDAIEQIL (118 aa). Asp-55 is modified (4-aspartylphosphate). Residues 149–214 form the HTH luxR-type domain; that stretch reads APELLQALTR…QAILSAGDID (66 aa). A DNA-binding region (H-T-H motif) is located at residues 173 to 192; the sequence is NKQIAYNLDIAETTVKAHVS.

Positive activator for glycerol metabolism. Regulates the expression of qedA in a positive manner and governs the expression of ADH I and ADH IIB. General regulator of quinoprotein ethanol oxidation and affects expression of ADH IIG activity but is not the sole regulator. The sequence is that of Glycerol metabolism activator from Pseudomonas putida (Arthrobacter siderocapsulatus).